The primary structure comprises 232 residues: Sugar fermentation stimulation protein homolog (232 aa).

Belongs to the SfsA family.

The protein is Sugar fermentation stimulation protein homolog of Pyrobaculum arsenaticum (strain DSM 13514 / JCM 11321 / PZ6).